Reading from the N-terminus, the 722-residue chain is 1,4-alpha-glucan branching enzyme GlgB (722 aa).

Catalysis depends on Asp401, which acts as the Nucleophile. Catalysis depends on Glu454, which acts as the Proton donor.

It belongs to the glycosyl hydrolase 13 family. GlgB subfamily. As to quaternary structure, monomer.

It catalyses the reaction Transfers a segment of a (1-&gt;4)-alpha-D-glucan chain to a primary hydroxy group in a similar glucan chain.. It functions in the pathway glycan biosynthesis; glycogen biosynthesis. In terms of biological role, catalyzes the formation of the alpha-1,6-glucosidic linkages in glycogen by scission of a 1,4-alpha-linked oligosaccharide from growing alpha-1,4-glucan chains and the subsequent attachment of the oligosaccharide to the alpha-1,6 position. The protein is 1,4-alpha-glucan branching enzyme GlgB of Rubrobacter xylanophilus (strain DSM 9941 / JCM 11954 / NBRC 16129 / PRD-1).